The primary structure comprises 448 residues: Phosphoglucosamine mutase (448 aa).

Ser108 functions as the Phosphoserine intermediate in the catalytic mechanism. The Mg(2+) site is built by Ser108, Asp247, Asp249, and Asp251. Position 108 is a phosphoserine (Ser108).

Belongs to the phosphohexose mutase family. Requires Mg(2+) as cofactor. Activated by phosphorylation.

It catalyses the reaction alpha-D-glucosamine 1-phosphate = D-glucosamine 6-phosphate. Catalyzes the conversion of glucosamine-6-phosphate to glucosamine-1-phosphate. This is Phosphoglucosamine mutase from Herminiimonas arsenicoxydans.